The sequence spans 162 residues: Cyclic pyranopterin monophosphate synthase (162 aa).

Substrate-binding positions include 75–77 (LCH) and 113–114 (ME). Aspartate 128 is an active-site residue.

It belongs to the MoaC family. As to quaternary structure, homohexamer; trimer of dimers.

The catalysed reaction is (8S)-3',8-cyclo-7,8-dihydroguanosine 5'-triphosphate = cyclic pyranopterin phosphate + diphosphate. The protein operates within cofactor biosynthesis; molybdopterin biosynthesis. Its function is as follows. Catalyzes the conversion of (8S)-3',8-cyclo-7,8-dihydroguanosine 5'-triphosphate to cyclic pyranopterin monophosphate (cPMP). This chain is Cyclic pyranopterin monophosphate synthase, found in Klebsiella pneumoniae subsp. pneumoniae (strain ATCC 700721 / MGH 78578).